The primary structure comprises 654 residues: Collagen alpha-1(XXV) chain (654 aa).

A disordered region spans residues 1–26 (MLLKKHAGKGGGREPRSEDPTPAEQH). The Cytoplasmic segment spans residues 1-33 (MLLKKHAGKGGGREPRSEDPTPAEQHCARTMPP). A helical; Signal-anchor for type II membrane protein membrane pass occupies residues 34 to 54 (CAVLAALLSVVAVVSCLYLGV). Topologically, residues 55–654 (KTNDLQARIA…GLPMPGCWQK (600 aa)) are extracellular. Glu113 is subject to Pyrrolidone carboxylic acid (Glu). Positions 116 to 168 (SECNCPAGPPGKRGKRGRRGESGPPGQPGPQGPPGPKGDKGEQGDQGPRMVFP) are disordered. In terms of domain architecture, Collagen-like 1 spans 121–164 (PAGPPGKRGKRGRRGESGPPGQPGPQGPPGPKGDKGEQGDQGPR). Positions 140–151 (PGQPGPQGPPGP) are enriched in pro residues. Residues 181–188 (LIKRRLIK) form an interaction with amyloid-beta peptide region. Disordered regions lie at residues 189–426 (GDQG…QGAT) and 445–654 (LTVT…CWQK). 5 consecutive Collagen-like domains span residues 192–247 (GQAG…QKGS), 249–308 (GAPG…PGSS), 311–370 (GIKG…AGPP), 372–425 (RGER…DQGA), and 447–505 (VTGP…PGLP). Pro residues predominate over residues 196 to 208 (PPGPPGPPGPRGP). Positions 230–245 (PGEQGLMGPLGPPGQK) are enriched in low complexity. The segment covering 280–290 (EPGEQGEKGDA) has biased composition (basic and acidic residues). A compositionally biased stretch (low complexity) spans 336–358 (LPGIKGEPGFIGPQGEPGLPGLP). Composition is skewed to basic and acidic residues over residues 361 to 377 (KGER…ERGE) and 398 to 407 (SKGDRGEKGD). Residues 457–466 (QGLQGPKGEQ) show a composition bias toward low complexity. Residues 494–503 (GEKGGIGLPG) are compositionally biased toward gly residues. Over residues 517–527 (SGMPGPQGPSI) the composition is skewed to low complexity. Positions 528–543 (IGPPGPPGPHGPPGPM) are enriched in pro residues. One can recognise a Collagen-like 7 domain in the interval 571–630 (GEKGAMGEPGPRGPYGLPGKDGEPGLDGFPGPRGEKGDLGEKGEKGFRGVKGEKGEPGQP). Basic and acidic residues predominate over residues 603 to 626 (RGEKGDLGEKGEKGFRGVKGEKGE).

Forms homodimers and homotrimers. Binds to the fibrillized forms of amyloid-beta protein 40 (beta-APP40) and amyloid-beta protein 42 (beta-APP42). Found associated with beta-APP42 more frequently than with beta-APP40. Post-translationally, undergoes proteolytic cleavage by furin protease to yield the soluble collagen-like Alzheimer amyloid plaque component. In terms of processing, glycosylated. Hydroxylated on 11% of proline residues and 49% of lysine residues. In terms of tissue distribution, expressed predominantly in brain. Deposited preferentially in primitive or neuritic amyloid plaques which are typical of Alzheimer disease.

Its subcellular location is the membrane. Inhibits fibrillization of amyloid-beta peptide during the elongation phase. Has also been shown to assemble amyloid fibrils into protease-resistant aggregates. Binds heparin. The chain is Collagen alpha-1(XXV) chain from Homo sapiens (Human).